The sequence spans 159 residues: uncharacterized protein (159 aa).

The a divalent metal cation site is built by H44, H124, and H128.

It belongs to the DinB family.

This is an uncharacterized protein from Bacillus subtilis (strain 168).